Here is a 133-residue protein sequence, read N- to C-terminus: Fluoride-specific ion channel FluC (133 aa).

The next 4 membrane-spanning stretches (helical) occupy residues 5 to 25, 43 to 63, 76 to 96, and 108 to 128; these read VPATSLILWLAVALGGALGAL, VATLTVNVLGSFLMGVFYVVI, VIMIGFLGAFTTFSTFSIESL, and ISYVVANVVLSISAVVVAIVL. Positions 83 and 86 each coordinate Na(+).

Belongs to the fluoride channel Fluc/FEX (TC 1.A.43) family.

It is found in the cell inner membrane. It catalyses the reaction fluoride(in) = fluoride(out). Na(+) is not transported, but it plays an essential structural role and its presence is essential for fluoride channel function. In terms of biological role, fluoride-specific ion channel. Important for reducing fluoride concentration in the cell, thus reducing its toxicity. In Saccharophagus degradans (strain 2-40 / ATCC 43961 / DSM 17024), this protein is Fluoride-specific ion channel FluC.